An 850-amino-acid chain; its full sequence is MEPLKNLFLKSPLGSWNGSGSGGGGGTGGVRPEGSPKATAAYANPVWTALFDYEPNGQDELALRKGDRVEVLSRDAAISGDEGWWAGQVGGQVGIFPSNYVSRGGGPPPCEVASFQELRLEEVIGIGGFGKVYRGSWRGELVAVKAARQDPDEDISVTAESVRQEARLFAMLAHPNIIALKAVCLEEPNLCLVMEYAAGGPLSRALAGRRVPPHVLVNWAVQIARGMHYLHCEALVPVIHRDLKSNNILLLQPIEGDDMEHKTLKITDFGLAREWHKTTQMSAAGTYAWMAPEVIKASTFSKGSDVWSFGVLLWELLTGEVPYRGIDCLAVAYGVAVNKLTLPIPSTCPEPFAQLMADCWAQDPHRRPDFASILQQLEALEAQVLREMPRDSFHSMQEGWKREIQGLFDELRAKEKELLSREEELTRAAREQRSQAEQLRRREHLLAQWELEVFERELTLLLQQVDRERPHVRRRRGTFKRSKLRARDGGERISMPLDFKHRITVQASPGLDRRRNVFEVGAGDSPTFPRFRAIQLEPTESGQTWGRQSPRRLEDSSNGERRACWAWGPSSPKPGEAQNGRRRSRMDEATWYLDSDDSSPLGSPSTPPALNGNPPRPSPEPEEPRRAGPTERGNSSGTPKLIQRALLRGTALLASLGLGRDLQPPGGLSRERGESPTAPPPAQMPSPCPPELPSTPLIRLSQTTPDAHSSPTPGPLLLDLGVPSGQPSAKSPRREETRGRTVSPPPGISRSAPGTPGTPRSPPLGLISRPRPSPLRSRIDPWSFVSAGPRPSPLPSPQPAPRRAPWTLFPDSDPFWDSPPANPFRGGSQDCRTQTKDMGAQAPWAPEAGP.

Position 11 is a phosphoserine (S11). The tract at residues 16–35 is disordered; sequence WNGSGSGGGGGTGGVRPEGS. A compositionally biased stretch (gly residues) spans 17–31; sequence NGSGSGGGGGTGGVR. Position 35 is a phosphoserine (S35). In terms of domain architecture, SH3 spans 42-106; the sequence is YANPVWTALF…PSNYVSRGGG (65 aa). Positions 118–380 constitute a Protein kinase domain; it reads LRLEEVIGIG…ASILQQLEAL (263 aa). Residues 124-132 and K145 each bind ATP; that span reads IGIGGFGKV. D242 acts as the Proton acceptor in catalysis. A Phosphothreonine; by autocatalysis modification is found at T278. S282 is modified (phosphoserine; by autocatalysis and MAP4K1). Residue S395 is modified to Phosphoserine. 2 leucine-zipper regions span residues 404–425 and 439–460; these read IQGLFDELRAKEKELLSREEEL and LRRREHLLAQWELEVFERELTL. Phosphoserine occurs at positions 508 and 525. The segment at 535–644 is disordered; it reads QLEPTESGQT…SSGTPKLIQR (110 aa). Over residues 538-547 the composition is skewed to polar residues; it reads PTESGQTWGR. A phosphoserine mark is found at S549, S556, and S557. Residues 551-563 show a composition bias toward basic and acidic residues; the sequence is RRLEDSSNGERRA. A compositionally biased stretch (low complexity) spans 598–610; the sequence is SSPLGSPSTPPAL. S655 carries the post-translational modification Phosphoserine. A disordered region spans residues 657–850; that stretch reads GLGRDLQPPG…QAPWAPEAGP (194 aa). The segment covering 677-693 has biased composition (pro residues); it reads TAPPPAQMPSPCPPELP. A compositionally biased stretch (polar residues) spans 700–711; the sequence is LSQTTPDAHSSP. Position 709 is a phosphoserine (S709). The residue at position 712 (T712) is a Phosphothreonine. Phosphoserine is present on residues S728, S731, S743, S751, S761, S773, S792, S796, and S818. A compositionally biased stretch (low complexity) spans 763–776; that stretch reads PLGLISRPRPSPLR. The segment covering 790 to 802 has biased composition (pro residues); sequence RPSPLPSPQPAPR. The segment covering 803–819 has biased composition (low complexity); sequence RAPWTLFPDSDPFWDSP.

It belongs to the protein kinase superfamily. STE Ser/Thr protein kinase family. MAP kinase kinase kinase subfamily. Homodimer; undergoes dimerization during activation. Interacts with MAP2K4/MKK4 and MAP2K7/MKK7. Found in a complex with SH3RF1, RAC1, MAP2K7/MKK7, MAPK8IP1/JIP1 and MAPK8/JNK1. It depends on Mg(2+) as a cofactor. Autophosphorylation on serine and threonine residues within the activation loop plays a role in enzyme activation. Thr-278 is likely to be the main autophosphorylation site. Phosphorylation of Ser-556 and Ser-557 is induced by CDC42.

It is found in the cytoplasm. Its subcellular location is the cytoskeleton. It localises to the microtubule organizing center. The protein localises to the centrosome. It carries out the reaction L-seryl-[protein] + ATP = O-phospho-L-seryl-[protein] + ADP + H(+). The catalysed reaction is L-threonyl-[protein] + ATP = O-phospho-L-threonyl-[protein] + ADP + H(+). Homodimerization via the leucine zipper domains is required for autophosphorylation and subsequent activation. Functionally, activates the JUN N-terminal pathway. Required for serum-stimulated cell proliferation and for mitogen and cytokine activation of MAPK14 (p38), MAPK3 (ERK) and MAPK8 (JNK1) through phosphorylation and activation of MAP2K4/MKK4 and MAP2K7/MKK7. Plays a role in mitogen-stimulated phosphorylation and activation of BRAF, but does not phosphorylate BRAF directly. Influences microtubule organization during the cell cycle. This is Mitogen-activated protein kinase kinase kinase 11 (Map3k11) from Mus musculus (Mouse).